Consider the following 106-residue polypeptide: Nucleoid-associated protein Noc_2594 (106 aa).

Disordered regions lie at residues Met-1–Glu-20 and Gln-85–Leu-106. Positions Lys-10–Glu-20 are enriched in polar residues.

This sequence belongs to the YbaB/EbfC family. As to quaternary structure, homodimer.

The protein resides in the cytoplasm. It localises to the nucleoid. Functionally, binds to DNA and alters its conformation. May be involved in regulation of gene expression, nucleoid organization and DNA protection. The sequence is that of Nucleoid-associated protein Noc_2594 from Nitrosococcus oceani (strain ATCC 19707 / BCRC 17464 / JCM 30415 / NCIMB 11848 / C-107).